A 371-amino-acid polypeptide reads, in one-letter code: Probable beta-1,4-xylosyltransferase GT43A (371 aa).

Residues 1-19 lie on the Cytoplasmic side of the membrane; that stretch reads MGTAAVAAAERPKQRRSSH. A helical; Signal-anchor for type II membrane protein transmembrane segment spans residues 20–42; the sequence is LWKKALLHFSLCFVMGFFTGFAP. Residues 43-371 lie on the Lumenal side of the membrane; it reads SSSSSWRAGS…TSTPKTHNRR (329 aa). Residues Asn176 and Asn299 are each glycosylated (N-linked (GlcNAc...) asparagine).

It belongs to the glycosyltransferase 43 family.

It is found in the golgi apparatus membrane. Probable beta-1,4-xylosyltransferase involved in xylan biosynthesis in cell walls. This chain is Probable beta-1,4-xylosyltransferase GT43A, found in Oryza sativa subsp. japonica (Rice).